The primary structure comprises 446 residues: 3-phosphoshikimate 1-carboxyvinyltransferase (446 aa).

3-phosphoshikimate is bound by residues lysine 26, serine 27, and arginine 31. A phosphoenolpyruvate-binding site is contributed by lysine 26. The phosphoenolpyruvate site is built by glycine 100 and arginine 128. The 3-phosphoshikimate site is built by serine 171, serine 172, glutamine 173, serine 200, glutamate 315, and histidine 344. Residue glutamine 173 coordinates phosphoenolpyruvate. Glutamate 315 functions as the Proton acceptor in the catalytic mechanism. Positions 348, 389, and 414 each coordinate phosphoenolpyruvate.

This sequence belongs to the EPSP synthase family. Monomer.

The protein resides in the cytoplasm. It catalyses the reaction 3-phosphoshikimate + phosphoenolpyruvate = 5-O-(1-carboxyvinyl)-3-phosphoshikimate + phosphate. It participates in metabolic intermediate biosynthesis; chorismate biosynthesis; chorismate from D-erythrose 4-phosphate and phosphoenolpyruvate: step 6/7. Catalyzes the transfer of the enolpyruvyl moiety of phosphoenolpyruvate (PEP) to the 5-hydroxyl of shikimate-3-phosphate (S3P) to produce enolpyruvyl shikimate-3-phosphate and inorganic phosphate. The polypeptide is 3-phosphoshikimate 1-carboxyvinyltransferase (Mycolicibacterium gilvum (strain PYR-GCK) (Mycobacterium gilvum (strain PYR-GCK))).